The chain runs to 142 residues: Hemoglobin subunit alpha-1 (142 aa).

The 141-residue stretch at leucine 2–arginine 142 folds into the Globin domain. Histidine 59 contributes to the O2 binding site. Histidine 88 is a binding site for heme b.

The protein belongs to the globin family. Heterotetramer of two alpha chains and two beta chains. Red blood cells.

Functionally, involved in oxygen transport from the lung to the various peripheral tissues. The chain is Hemoglobin subunit alpha-1 (hba1) from Xenopus borealis (Kenyan clawed frog).